A 238-amino-acid chain; its full sequence is MGKDRQPRGQQRQGDAAGPDDPGPKKGAGTREQRGEEEAQTCCGCRFPLLLALLQLALGVAVTVVGFLMASVSSSLLVRATPYWAGIIVCVVAYLGLFMLCVSYQVDERTCIQFSMKLLYFVLSALGLVVCVLAVAFAAHHYSLLTHLTCENAPDSCQCKLPSSEPLSRTFVYRDVTDCTSITGTFQVFLLVQMVLNLVCGLVCLVACFVMWKHRYQVFYVGVRMCPLSASEGQQQKV.

The disordered stretch occupies residues M1–Q33. The Extracellular segment spans residues M1–P48. Over residues R8–D20 the composition is skewed to low complexity. The helical transmembrane segment at L49–M69 threads the bilayer. Residues A70–T81 are Cytoplasmic-facing. A helical membrane pass occupies residues P82 to V102. The Cytoplasmic segment spans residues S103–K117. The chain crosses the membrane as a helical span at residues L118–A138. The Extracellular segment spans residues A139–V188. The helical transmembrane segment at F189–F209 threads the bilayer. At V210–V238 the chain is on the cytoplasmic side.

It is found in the cell membrane. The protein resides in the sarcolemma. Its subcellular location is the postsynaptic cell membrane. Functionally, component of the dystrophin-glycoprotein complex (DGC), a complex that spans the muscle plasma membrane and forms a link between the F-actin cytoskeleton and the extracellular matrix. Preferentially associates with the sarcoglycan subcomplex of the DGC. The protein is Sarcospan (SSPN) of Oryctolagus cuniculus (Rabbit).